The chain runs to 85 residues: U4-theraphotoxin-Hhn1a (85 aa).

An N-terminal signal peptide occupies residues 1–22 (MKVTLIAILTCATVLVLHTTAA). Positions 23-48 (EELEAESQLMEVGMPDTELAAVDEER) are excised as a propeptide. Cystine bridges form between Cys-52/Cys-66, Cys-56/Cys-77, and Cys-71/Cys-82.

Belongs to the neurotoxin 12 (Hwtx-2) family. 02 (Hwtx-2) subfamily. Monomer. Expressed by the venom gland.

It localises to the secreted. Its function is as follows. Neurotoxin active on both insects and mammals. The sequence is that of U4-theraphotoxin-Hhn1a from Cyriopagopus hainanus (Chinese bird spider).